The following is a 452-amino-acid chain: Phosphoglucosamine mutase (452 aa).

Catalysis depends on Ser108, which acts as the Phosphoserine intermediate. Mg(2+)-binding residues include Ser108, Asp247, Asp249, and Asp251. The residue at position 108 (Ser108) is a Phosphoserine.

The protein belongs to the phosphohexose mutase family. Requires Mg(2+) as cofactor. Activated by phosphorylation.

The enzyme catalyses alpha-D-glucosamine 1-phosphate = D-glucosamine 6-phosphate. Its function is as follows. Catalyzes the conversion of glucosamine-6-phosphate to glucosamine-1-phosphate. This chain is Phosphoglucosamine mutase, found in Burkholderia thailandensis (strain ATCC 700388 / DSM 13276 / CCUG 48851 / CIP 106301 / E264).